The chain runs to 241 residues: MTESLLYSGKAKNMFQTDDPEIVHIHYKDQATALNGKVKEKIEGKGQLTSHISALLFNYLTVQGIENHFQKELENGDALVRKVKIVPLEVVTRNFAAGHFASRFNVPMHKALKPAVHEFYFKSDSLDDPFINNEQILALEIADKKTISQMKEEAELINQKLINLFDQIGITLIDFKVEFGFTSQGKLLLADELSPDNMRLLDKESGKSLDKDVFRQKIGDVRIGYQTVLDRLNNKLIAGEN.

This sequence belongs to the SAICAR synthetase family.

It carries out the reaction 5-amino-1-(5-phospho-D-ribosyl)imidazole-4-carboxylate + L-aspartate + ATP = (2S)-2-[5-amino-1-(5-phospho-beta-D-ribosyl)imidazole-4-carboxamido]succinate + ADP + phosphate + 2 H(+). It functions in the pathway purine metabolism; IMP biosynthesis via de novo pathway; 5-amino-1-(5-phospho-D-ribosyl)imidazole-4-carboxamide from 5-amino-1-(5-phospho-D-ribosyl)imidazole-4-carboxylate: step 1/2. In Oenococcus oeni (strain ATCC BAA-331 / PSU-1), this protein is Phosphoribosylaminoimidazole-succinocarboxamide synthase.